The chain runs to 600 residues: Elongation factor 4 (600 aa).

The tr-type G domain maps to 5–187; the sequence is SNIRNFSIIA…ALVERIPAPT (183 aa). GTP-binding positions include 17–22 and 134–137; these read DHGKST and NKID.

It belongs to the TRAFAC class translation factor GTPase superfamily. Classic translation factor GTPase family. LepA subfamily.

It localises to the cell inner membrane. It carries out the reaction GTP + H2O = GDP + phosphate + H(+). Functionally, required for accurate and efficient protein synthesis under certain stress conditions. May act as a fidelity factor of the translation reaction, by catalyzing a one-codon backward translocation of tRNAs on improperly translocated ribosomes. Back-translocation proceeds from a post-translocation (POST) complex to a pre-translocation (PRE) complex, thus giving elongation factor G a second chance to translocate the tRNAs correctly. Binds to ribosomes in a GTP-dependent manner. This is Elongation factor 4 from Psychrobacter sp. (strain PRwf-1).